Reading from the N-terminus, the 187-residue chain is Adenylate kinase (187 aa).

10 to 15 (GSGKGT) lines the ATP pocket. The interval 30-59 (STGDLLRSEVVAGTPLGLQAKQVMAQGDLV) is NMP. Residues T31, R36, 57–59 (DLV), 85–88 (GYPR), and Q92 each bind AMP. An LID region spans residues 126-136 (GRAQAEGREDD). R127 provides a ligand contact to ATP. AMP contacts are provided by R133 and R144. G172 is a binding site for ATP.

It belongs to the adenylate kinase family. Monomer.

It localises to the cytoplasm. The catalysed reaction is AMP + ATP = 2 ADP. It participates in purine metabolism; AMP biosynthesis via salvage pathway; AMP from ADP: step 1/1. Functionally, catalyzes the reversible transfer of the terminal phosphate group between ATP and AMP. Plays an important role in cellular energy homeostasis and in adenine nucleotide metabolism. In Xylella fastidiosa (strain M12), this protein is Adenylate kinase.